A 712-amino-acid polypeptide reads, in one-letter code: Origin recognition complex subunit 3 (712 aa).

S23 and S516 each carry phosphoserine.

Belongs to the ORC3 family. In terms of assembly, component of ORC, a complex composed of at least 6 subunits: ORC1, ORC2, ORC3, ORC4, ORC5 and ORC6. ORC is regulated in a cell-cycle dependent manner. It is sequentially assembled at the exit from anaphase of mitosis and disassembled as cells enter S phase. Post-translationally, multi-mono-ubiquitinated by OBI1; ubiquitination is important for efficient DNA replication origin site activation. Ubiquitination levels are low in mitotic and early G1-phAse cells and are induced in late G1-/early S-phase, peaking in S-phase and decrease toward the end of the cell cycle.

The protein resides in the nucleus. The protein localises to the chromosome. Component of the origin recognition complex (ORC) that binds origins of replication. DNA-binding is ATP-dependent. The specific DNA sequences that define origins of replication have not been identified yet. ORC is required to assemble the pre-replication complex necessary to initiate DNA replication. Binds histone H3 and H4 trimethylation marks H3K9me3, H3K27me3 and H4K20me3. This chain is Origin recognition complex subunit 3 (ORC3), found in Bos taurus (Bovine).